Reading from the N-terminus, the 774-residue chain is Penicillin acylase 2 proenzyme (774 aa).

Ser-240 functions as the Nucleophile in the catalytic mechanism.

The protein belongs to the peptidase S45 family. In terms of assembly, heterodimer of a small subunit and a large subunit processed from the same precursor.

It catalyses the reaction a penicillin + H2O = 6-aminopenicillanate + a carboxylate. This chain is Penicillin acylase 2 proenzyme (acyII), found in Pseudomonas sp. (strain SE83).